Consider the following 411-residue polypeptide: Putative ion-transport protein YfeO (411 aa).

11 helical membrane-spanning segments follow: residues 9–29, 54–74, 99–119, 149–169, 186–206, 223–243, 258–278, 296–316, 322–342, 343–363, and 386–406; these read MLLL…VLIA, DSPF…GLII, ALPG…SLGP, ILAS…AALI, LFAP…FFHP, IASG…AVWC, VLIL…GGPL, LGAG…VIAA, GGRI…LHAH, VEAV…VLVV, and LLCI…LLAA.

It belongs to the chloride channel (TC 2.A.49) family.

The protein localises to the cell membrane. The chain is Putative ion-transport protein YfeO from Salmonella schwarzengrund (strain CVM19633).